A 376-amino-acid chain; its full sequence is N-acetyldiaminopimelate deacetylase (376 aa).

The active site involves aspartate 69. The Proton acceptor role is filled by glutamate 128.

This sequence belongs to the peptidase M20A family. N-acetyldiaminopimelate deacetylase subfamily.

The enzyme catalyses N-acetyl-(2S,6S)-2,6-diaminopimelate + H2O = (2S,6S)-2,6-diaminopimelate + acetate. It participates in amino-acid biosynthesis; L-lysine biosynthesis via DAP pathway; LL-2,6-diaminopimelate from (S)-tetrahydrodipicolinate (acetylase route): step 3/3. Its function is as follows. Catalyzes the conversion of N-acetyl-diaminopimelate to diaminopimelate and acetate. This is N-acetyldiaminopimelate deacetylase from Bacillus cereus (strain ATCC 14579 / DSM 31 / CCUG 7414 / JCM 2152 / NBRC 15305 / NCIMB 9373 / NCTC 2599 / NRRL B-3711).